A 336-amino-acid polypeptide reads, in one-letter code: Potassium channel subfamily K member 1 (336 aa).

The Cytoplasmic portion of the chain corresponds to 1–20 (MLQSLAGSSCVRLVERHRSA). The chain crosses the membrane as a helical span at residues 21–41 (WCFGFLVLGYLLYLVFGAVVF). The Extracellular portion of the chain corresponds to 42 to 103 (SSVELPYEDL…SNASGNWNWD (62 aa)). An N-linked (GlcNAc...) asparagine glycan is attached at Asn95. The segment at residues 104–116 (FASALFFASTVLS) is an intramembrane region (helical). The stretch at 117–122 (TTGYGH) is an intramembrane region. Residues 117–122 (TTGYGH) form a selectivity filter 1 region. Over 123–132 (TVPLSDGGKA) the chain is Extracellular. The helical transmembrane segment at 133–156 (FCIIYSVIGIPFTLLFLTAVVQRV) threads the bilayer. Residues 157–181 (TVHVTRRPVLYFHVRWGFSKQVVAI) lie on the Cytoplasmic side of the membrane. The helical transmembrane segment at 182 to 202 (VHAVLLGLITVSCFFFIPAAV) threads the bilayer. Residues 203 to 211 (FSVLEDDWN) lie on the Extracellular side of the membrane. Residues 212–224 (FLESFYFCFISLS) constitute an intramembrane region (helical). Positions 225-230 (TIGLGD) are selectivity filter 2. An intramembrane segment occupies 225 to 231 (TIGLGDY). Residues 232–243 (VPGEGYNQKFRE) lie on the Extracellular side of the membrane. A helical membrane pass occupies residues 244–267 (LYKIGITCYLLLGLIAMLVVLETF). At 268 to 336 (CELHELKKFR…SACADGPANH (69 aa)) the chain is on the cytoplasmic side. Lys274 participates in a covalent cross-link: Glycyl lysine isopeptide (Lys-Gly) (interchain with G-Cter in SUMO). The interval 293–299 (IIEHDQL) is important for intracellular retention in recycling endosomes. Positions 315-336 (QKQNEPFVATPSSACADGPANH) are disordered. Ser326 carries the post-translational modification Phosphoserine.

The protein belongs to the two pore domain potassium channel (TC 1.A.1.8) family. In terms of assembly, homodimer; disulfide-linked. Heterodimer with KCNK2; disulfide-linked. In astrocytes, forms mostly heterodimeric potassium channels with KCNK2, with only a minor proportion of functional channels containing homodimeric KCNK1. Interacts with KCNK3 and KCNK9, forming functional heterodimeric channels. Interacts with GNG4. Identified in a complex with PSD and ARF6; interacts only with PSD that is bound to ARF6. Interacts with UBE2I. Post-translationally, sumoylation is controversial. Sumoylated by UBE2I. Not sumoylated when expressed in xenopus oocytes or mammalian cells. Sumoylation inactivates the channel, but does not interfere with expression at the cell membrane. Sumoylation of a single subunit is sufficient to silence the dimeric channel. Sumoylation of KCNK1 is sufficient to silence heterodimeric channels formed by KCNK1 and KCNK3 or KCNK9. Desumoylated by SENP1; this activates the channel. Desumoylated by SENP1; this strongly increases halothane-mediated activation of heterodimeric channels formed with KCNK9. SENP1 treatment has no effect. In terms of tissue distribution, expressed in renal distal tubules, especially in cortical collecting duct and cortical thick ascending limb, with lower levels in the connecting tubule.

The protein resides in the cell membrane. It localises to the recycling endosome. Its subcellular location is the synaptic cell membrane. It is found in the cytoplasmic vesicle. The protein localises to the perikaryon. The protein resides in the cell projection. It localises to the dendrite. Its subcellular location is the apical cell membrane. The enzyme catalyses K(+)(in) = K(+)(out). The catalysed reaction is NH4(+)(in) = NH4(+)(out). It carries out the reaction Na(+)(in) = Na(+)(out). It catalyses the reaction Rb(+)(in) = Rb(+)(out). The enzyme catalyses Cs(+)(in) = Cs(+)(out). The catalysed reaction is Li(+)(in) = Li(+)(out). It carries out the reaction L-glutamate(out) = L-glutamate(in). It catalyses the reaction chloride(in) = chloride(out). Its function is as follows. Ion channel that contributes to passive transmembrane potassium transport and to the regulation of the resting membrane potential in brain astrocytes, but also in kidney and in other tissues. Forms dimeric channels through which potassium ions pass in accordance with their electrochemical gradient. The channel is selective for K(+) ions at physiological potassium concentrations and at neutral pH, but becomes permeable to Na(+) at subphysiological K(+) levels and upon acidification of the extracellular medium. The homodimer has very low potassium channel activity, when expressed in heterologous systems, and can function as weakly inward rectifying potassium channel. Channel activity is modulated by activation of serotonin receptors. Heterodimeric channels containing KCNK1 and KCNK2 have much higher activity, and may represent the predominant form in astrocytes. Heterodimeric channels containing KCNK1 and KCNK3 or KCNK9 have much higher activity. Heterodimeric channels formed by KCNK1 and KCNK9 may contribute to halothane-sensitive currents. Mediates outward rectifying potassium currents in dentate gyrus granule cells and contributes to the regulation of their resting membrane potential. Contributes to the regulation of action potential firing in dentate gyrus granule cells and down-regulates their intrinsic excitability. In astrocytes, the heterodimer formed by KCNK1 and KCNK2 is required for rapid glutamate release in response to activation of G-protein coupled receptors, such as F2R and CNR1. Required for normal ion and water transport in the kidney. Contributes to the regulation of the resting membrane potential of pancreatic beta cells. The low channel activity of homodimeric KCNK1 may be due to sumoylation. The low channel activity may be due to rapid internalization from the cell membrane and retention in recycling endosomes. Permeable to monovalent cations with ion selectivity for K(+) &gt; Rb(+) &gt;&gt; NH4(+) &gt;&gt; Cs(+) = Na(+) = Li(+). This is Potassium channel subfamily K member 1 from Oryctolagus cuniculus (Rabbit).